Here is a 100-residue protein sequence, read N- to C-terminus: NADH-quinone oxidoreductase subunit K (100 aa).

3 helical membrane-spanning segments follow: residues 4 to 24, 28 to 48, and 60 to 80; these read LQHG…GLLV, LLFM…AFIV, and VMYI…LALL.

Belongs to the complex I subunit 4L family. NDH-1 is composed of 13 different subunits. Subunits NuoA, H, J, K, L, M, N constitute the membrane sector of the complex.

It is found in the cell inner membrane. The catalysed reaction is a quinone + NADH + 5 H(+)(in) = a quinol + NAD(+) + 4 H(+)(out). Its function is as follows. NDH-1 shuttles electrons from NADH, via FMN and iron-sulfur (Fe-S) centers, to quinones in the respiratory chain. The immediate electron acceptor for the enzyme in this species is believed to be ubiquinone. Couples the redox reaction to proton translocation (for every two electrons transferred, four hydrogen ions are translocated across the cytoplasmic membrane), and thus conserves the redox energy in a proton gradient. This chain is NADH-quinone oxidoreductase subunit K, found in Serratia proteamaculans (strain 568).